The sequence spans 164 residues: Low molecular weight protein-tyrosine-phosphatase (164 aa).

Residue cysteine 9 is the Nucleophile of the active site. Residue arginine 15 is part of the active site. Catalysis depends on aspartate 128, which acts as the Proton donor.

It belongs to the low molecular weight phosphotyrosine protein phosphatase family.

It catalyses the reaction O-phospho-L-tyrosyl-[protein] + H2O = L-tyrosyl-[protein] + phosphate. Acts on tyrosine phosphorylated proteins, low-MW aryl phosphates and natural and synthetic acyl phosphates. May be involved in the regulation of sulfur amino acid metabolism. The sequence is that of Low molecular weight protein-tyrosine-phosphatase (ptpA) from Streptomyces coelicolor (strain ATCC BAA-471 / A3(2) / M145).